Reading from the N-terminus, the 165-residue chain is Phosphopantetheine adenylyltransferase (165 aa).

Residue Thr9 coordinates substrate. Residues 9–10 and His17 contribute to the ATP site; that span reads TF. Residues Lys41, Leu73, and Arg87 each coordinate substrate. Residues 88-90, Glu98, and 123-129 each bind ATP; these read GLR and YQFISGT.

This sequence belongs to the bacterial CoaD family. In terms of assembly, homohexamer. Mg(2+) is required as a cofactor.

It is found in the cytoplasm. It carries out the reaction (R)-4'-phosphopantetheine + ATP + H(+) = 3'-dephospho-CoA + diphosphate. It participates in cofactor biosynthesis; coenzyme A biosynthesis; CoA from (R)-pantothenate: step 4/5. Reversibly transfers an adenylyl group from ATP to 4'-phosphopantetheine, yielding dephospho-CoA (dPCoA) and pyrophosphate. This is Phosphopantetheine adenylyltransferase from Polynucleobacter necessarius subsp. necessarius (strain STIR1).